The following is a 135-amino-acid chain: Retinol-binding protein 1 (135 aa).

The interval 22–32 is important for interaction with STRA6; it reads RALDVNVALRK. Residues K41, M63, and Q109 each coordinate all-trans-retinol.

The protein belongs to the calycin superfamily. Fatty-acid binding protein (FABP) family. As to quaternary structure, interacts (only as retinol-free apoprotein) with STRA6.

It is found in the cytoplasm. Its subcellular location is the lipid droplet. Cytoplasmic retinol-binding protein. Accepts retinol from the transport protein STRA6, and thereby contributes to retinol uptake, storage and retinoid homeostasis. In Bos taurus (Bovine), this protein is Retinol-binding protein 1 (RBP1).